The following is a 198-amino-acid chain: Protein uvp1 (198 aa).

The 140-residue stretch at 1 to 140 (MIIGYARKST…SGLAAARARG (140 aa)) folds into the Resolvase/invertase-type recombinase catalytic domain. S9 acts as the O-(5'-phospho-DNA)-serine intermediate in catalysis. Residues 168–187 (VGAVAKRFNVSRMTIYRYTT) constitute a DNA-binding region (H-T-H motif).

This sequence belongs to the site-specific recombinase resolvase family.

Functionally, cooperates with the mucAB genes in the DNA repair process. Could be a resolvase-invertase protein. This is Protein uvp1 (uvp1) from Escherichia coli.